We begin with the raw amino-acid sequence, 126 residues long: Glycine cleavage system H protein (126 aa).

The Lipoyl-binding domain occupies 22–104; sequence TVTIGITEYA…YEKAWMVKVE (83 aa). Lysine 63 carries the post-translational modification N6-lipoyllysine.

The protein belongs to the GcvH family. In terms of assembly, the glycine cleavage system is composed of four proteins: P, T, L and H. It depends on (R)-lipoate as a cofactor.

In terms of biological role, the glycine cleavage system catalyzes the degradation of glycine. The H protein shuttles the methylamine group of glycine from the P protein to the T protein. Its function is as follows. Is also involved in protein lipoylation via its role as an octanoyl/lipoyl carrier protein intermediate. The sequence is that of Glycine cleavage system H protein from Staphylococcus haemolyticus (strain JCSC1435).